A 214-amino-acid polypeptide reads, in one-letter code: Scytalone dehydratase-like protein mdpB (214 aa).

Substrate contacts are provided by Tyr-40 and Tyr-60. Active-site residues include His-95 and His-120.

It belongs to the scytalone dehydratase family.

It participates in secondary metabolite biosynthesis. Functionally, scytalone dehydratase-like protein; part of the gene cluster that mediates the biosynthesis of monodictyphenone, a prenyl xanthone derivative. The pathway begins with the synthesis of atrochrysone thioester by the polyketide synthase (PKS) mdpG. The atrochrysone carboxyl ACP thioesterase mdpF then breaks the thioester bond and releases the atrochrysone carboxylic acid from mdpG. The atrochrysone carboxylic acid is then converted to atrochrysone which is further transformed into emodin anthrone. The next step is performed by the anthrone oxygenase mdpH that catalyzes the oxidation of emodinanthrone to emodin. Emodin is further modified to yield monodictyphenone via several steps involving mdpB, mdpC mdpJ, mdpK and mdpL. These enzymes with xptA, xptB and xptC are also proposed to be involved in the synthesis of shamixanthone from emodin. Especially, direct reduction of emodin by the short chain dehydrogenase mdpC followed by dehydration catalyzed by the scytalone dehydratase-like protein mdpB gives loss of oxygen and formation of chrysophanol intermediate in two simple steps. The protein is Scytalone dehydratase-like protein mdpB of Emericella nidulans (strain FGSC A4 / ATCC 38163 / CBS 112.46 / NRRL 194 / M139) (Aspergillus nidulans).